Reading from the N-terminus, the 170-residue chain is MVDTTKNTKLFTSYGVSTSRTVSPEMAAKLISKAKRPLLMVGTLTLEPEILDRVVKISKAANIPIAATGSSMASLVDKDVDAKYINAHMLGFYLTDPKWPGLDGNGNYDMVIAIGFKKYYINQVLSAAKNFSNLKTIAIERGYIQNATMSFGNLSKADYYAALDELINAL.

Belongs to the CdhB family. As to quaternary structure, heterotetramer of two alpha and two epsilon subunits. The ACDS complex is made up of alpha, epsilon, beta, gamma and delta subunits with a probable stoichiometry of (alpha(2)epsilon(2))(4)-beta(8)-(gamma(1)delta(1))(8).

It functions in the pathway one-carbon metabolism; methanogenesis from acetate. Part of a complex that catalyzes the reversible cleavage of acetyl-CoA, allowing growth on acetate as sole source of carbon and energy. The alpha-epsilon subcomponent functions as a carbon monoxide dehydrogenase. The precise role of the epsilon subunit is unclear; it may have a stabilizing role within the alpha(2)epsilon(2) component and/or be involved in electron transfer to FAD during a potential FAD-mediated CO oxidation. The polypeptide is Acetyl-CoA decarbonylase/synthase complex subunit epsilon 1 (Methanosarcina barkeri (strain Fusaro / DSM 804)).